The sequence spans 733 residues: Photosystem I P700 chlorophyll a apoprotein A2 (733 aa).

Transmembrane regions (helical) follow at residues 46–69, 134–157, 174–198, 272–290, 329–352, 368–394, 416–438, and 516–534; these read IFASHFGHLAVIFLWTAGNLFHVA, LYLGSVGLLILASVLLFAGWLHLQ, LNHHLSGLLGVSSLAWTGHIVHVAI, IAHHQLAIAVVFIVAGHMY, LHMQLGLALACLGVATSLTAQHMY, AALYTHHQYIAGFLMVGAFAHGAIFFV, AIISHLSWASLFLGFHTLGLYIH, and FLVHHAIALGLHTTTLILV. Residues cysteine 558 and cysteine 567 each coordinate [4Fe-4S] cluster. A run of 2 helical transmembrane segments spans residues 574–595 and 642–664; these read AFYLAMFWMLNTIGWVTFYWHW and LSVWAWMFLFGHLIWATGFMFLI. Positions 653, 661, and 669 each coordinate chlorophyll a. Residue tryptophan 670 coordinates phylloquinone. The helical transmembrane segment at 706–726 threads the bilayer; it reads LVGLVHFTVGYVLTYAAFVIA.

It belongs to the PsaA/PsaB family. As to quaternary structure, the PsaA/B heterodimer binds the P700 chlorophyll special pair and subsequent electron acceptors. PSI consists of a core antenna complex that captures photons, and an electron transfer chain that converts photonic excitation into a charge separation. The eukaryotic PSI reaction center is composed of at least 11 subunits. Requires P700 is a chlorophyll a/chlorophyll a' dimer, A0 is one or more chlorophyll a, A1 is one or both phylloquinones and FX is a shared 4Fe-4S iron-sulfur center. as cofactor.

It localises to the plastid. It is found in the chloroplast thylakoid membrane. It catalyses the reaction reduced [plastocyanin] + hnu + oxidized [2Fe-2S]-[ferredoxin] = oxidized [plastocyanin] + reduced [2Fe-2S]-[ferredoxin]. In terms of biological role, psaA and PsaB bind P700, the primary electron donor of photosystem I (PSI), as well as the electron acceptors A0, A1 and FX. PSI is a plastocyanin/cytochrome c6-ferredoxin oxidoreductase, converting photonic excitation into a charge separation, which transfers an electron from the donor P700 chlorophyll pair to the spectroscopically characterized acceptors A0, A1, FX, FA and FB in turn. Oxidized P700 is reduced on the lumenal side of the thylakoid membrane by plastocyanin or cytochrome c6. This Phaeodactylum tricornutum (strain CCAP 1055/1) protein is Photosystem I P700 chlorophyll a apoprotein A2.